A 292-amino-acid chain; its full sequence is Poly(U)-specific endoribonuclease-A (292 aa).

Residues 8–285 (LNHELSKLFN…IGTAYPVLLS (278 aa)) form the EndoU domain. Catalysis depends on residues His-162, His-178, and Lys-224.

The protein belongs to the ENDOU family. Monomer. Mn(2+) is required as a cofactor.

The protein localises to the nucleus. It carries out the reaction uridylyl-uridylyl-ribonucleotide-RNA = a 3'-end uridylyl-2',3'-cyclophospho-uridine-RNA + a 5'-end dephospho-ribonucleoside-RNA. In terms of biological role, poly(U)-specific endoribonuclease involved in the processing of intron-encoded box C/D snoRNAs, such as U16 and U86. Releases products that have 2',3'-cyclic phosphate termini at the 3'-end. This Xenopus laevis (African clawed frog) protein is Poly(U)-specific endoribonuclease-A (endou-a).